The chain runs to 474 residues: JmjC domain-containing protein F (474 aa).

The interval 247–269 (KTKKQQQQQQTTTTTANNDNDNS) is disordered. Over residues 251-261 (QQQQQQTTTTT) the composition is skewed to low complexity. Residues 305-474 (AYLAQHGLIE…LSLSFWFIKK (170 aa)) form the JmjC domain.

The chain is JmjC domain-containing protein F (jcdF) from Dictyostelium discoideum (Social amoeba).